A 218-amino-acid polypeptide reads, in one-letter code: MSASLDLRCYLVTGAPHEKVVDVAAAAAAGGAGVVQVRSKPISVRDLTALAVEVAAAVQKANPATRVLIDDRVDVAAALMPEHNIHGVHIGQDDLDPRLARQLLGKDAIIGLTTGTLPLVQQANEYADVIDYIGAGPFRPTPTKDSGREPLGLEGYPALVEASRVPVVAIGDVHAEDAADLAATGVAGLAIVRGIMQAENPKAYAESVVSQFSEANER.

Residues 36–40 (QVRSK) and Asp-70 contribute to the 4-amino-2-methyl-5-(diphosphooxymethyl)pyrimidine site. Mg(2+)-binding residues include Asp-71 and Asp-94. Thr-113 lines the 4-amino-2-methyl-5-(diphosphooxymethyl)pyrimidine pocket. 141-143 (TPT) lines the 2-[(2R,5Z)-2-carboxy-4-methylthiazol-5(2H)-ylidene]ethyl phosphate pocket. Lys-144 lines the 4-amino-2-methyl-5-(diphosphooxymethyl)pyrimidine pocket.

The protein belongs to the thiamine-phosphate synthase family. It depends on Mg(2+) as a cofactor.

The catalysed reaction is 2-[(2R,5Z)-2-carboxy-4-methylthiazol-5(2H)-ylidene]ethyl phosphate + 4-amino-2-methyl-5-(diphosphooxymethyl)pyrimidine + 2 H(+) = thiamine phosphate + CO2 + diphosphate. It carries out the reaction 2-(2-carboxy-4-methylthiazol-5-yl)ethyl phosphate + 4-amino-2-methyl-5-(diphosphooxymethyl)pyrimidine + 2 H(+) = thiamine phosphate + CO2 + diphosphate. It catalyses the reaction 4-methyl-5-(2-phosphooxyethyl)-thiazole + 4-amino-2-methyl-5-(diphosphooxymethyl)pyrimidine + H(+) = thiamine phosphate + diphosphate. The protein operates within cofactor biosynthesis; thiamine diphosphate biosynthesis; thiamine phosphate from 4-amino-2-methyl-5-diphosphomethylpyrimidine and 4-methyl-5-(2-phosphoethyl)-thiazole: step 1/1. Its function is as follows. Condenses 4-methyl-5-(beta-hydroxyethyl)thiazole monophosphate (THZ-P) and 2-methyl-4-amino-5-hydroxymethyl pyrimidine pyrophosphate (HMP-PP) to form thiamine monophosphate (TMP). The chain is Thiamine-phosphate synthase from Corynebacterium jeikeium (strain K411).